Reading from the N-terminus, the 229-residue chain is UPF0758 protein CLH_0547 (229 aa).

The 123-residue stretch at 107-229 (KIMSPNDIAM…FISLKEKGFI (123 aa)) folds into the MPN domain. 3 residues coordinate Zn(2+): His-178, His-180, and Asp-191. Residues 178–191 (HNHPSGDPTPSKED) carry the JAMM motif motif.

The protein belongs to the UPF0758 family.

The polypeptide is UPF0758 protein CLH_0547 (Clostridium botulinum (strain Alaska E43 / Type E3)).